A 209-amino-acid polypeptide reads, in one-letter code: Imidazole glycerol phosphate synthase subunit HisH (209 aa).

The 207-residue stretch at 3-209 folds into the Glutamine amidotransferase type-1 domain; the sequence is KIAIIDYGMG…SILKNFGEMK (207 aa). Cys-81 (nucleophile) is an active-site residue. Catalysis depends on residues His-190 and Glu-192.

Heterodimer of HisH and HisF.

The protein localises to the cytoplasm. It catalyses the reaction 5-[(5-phospho-1-deoxy-D-ribulos-1-ylimino)methylamino]-1-(5-phospho-beta-D-ribosyl)imidazole-4-carboxamide + L-glutamine = D-erythro-1-(imidazol-4-yl)glycerol 3-phosphate + 5-amino-1-(5-phospho-beta-D-ribosyl)imidazole-4-carboxamide + L-glutamate + H(+). It carries out the reaction L-glutamine + H2O = L-glutamate + NH4(+). The protein operates within amino-acid biosynthesis; L-histidine biosynthesis; L-histidine from 5-phospho-alpha-D-ribose 1-diphosphate: step 5/9. Its function is as follows. IGPS catalyzes the conversion of PRFAR and glutamine to IGP, AICAR and glutamate. The HisH subunit catalyzes the hydrolysis of glutamine to glutamate and ammonia as part of the synthesis of IGP and AICAR. The resulting ammonia molecule is channeled to the active site of HisF. This Geobacter sulfurreducens (strain ATCC 51573 / DSM 12127 / PCA) protein is Imidazole glycerol phosphate synthase subunit HisH.